A 314-amino-acid polypeptide reads, in one-letter code: Ribonuclease Z (314 aa).

Residues histidine 60, histidine 62, aspartate 64, histidine 65, histidine 140, aspartate 209, and histidine 269 each coordinate Zn(2+). Catalysis depends on aspartate 64, which acts as the Proton acceptor.

The protein belongs to the RNase Z family. In terms of assembly, homodimer. Zn(2+) is required as a cofactor.

It catalyses the reaction Endonucleolytic cleavage of RNA, removing extra 3' nucleotides from tRNA precursor, generating 3' termini of tRNAs. A 3'-hydroxy group is left at the tRNA terminus and a 5'-phosphoryl group is left at the trailer molecule.. In terms of biological role, zinc phosphodiesterase, which displays some tRNA 3'-processing endonuclease activity. Probably involved in tRNA maturation, by removing a 3'-trailer from precursor tRNA. The sequence is that of Ribonuclease Z from Methanococcus maripaludis (strain C5 / ATCC BAA-1333).